We begin with the raw amino-acid sequence, 233 residues long: Large ribosomal subunit protein uL3 (233 aa).

This sequence belongs to the universal ribosomal protein uL3 family. Part of the 50S ribosomal subunit. Forms a cluster with proteins L14 and L19.

Its function is as follows. One of the primary rRNA binding proteins, it binds directly near the 3'-end of the 23S rRNA, where it nucleates assembly of the 50S subunit. In Ureaplasma urealyticum serovar 10 (strain ATCC 33699 / Western), this protein is Large ribosomal subunit protein uL3.